Here is a 302-residue protein sequence, read N- to C-terminus: MSNALYQSSISSLPLLGHGKVRDNYAVGEDKLLIVTTDRLSAFDVIMGEPIPDKGRVLNQMANFWFRKLAHIVPNHETGVAAETVVAPAEVEQVKGRAVVVKRLKPILVEAVVRGYLAGSGWKDYQATGKVCGIELPAGLQNAQKLPEPIFTPAAKAEMGEHDENISFGEVEERIGIALARQMRDISIRLYKEAAEFAATRGIIIADTKFEFGLDENGTLTLMDEVLTADSSRFWPADSYQVGTNPPSFDKQFVRDWLEAVRIDGKPWPKTAPAPKLPDDVIEKTAAKYREALTRLTGEELQ.

It belongs to the SAICAR synthetase family.

The catalysed reaction is 5-amino-1-(5-phospho-D-ribosyl)imidazole-4-carboxylate + L-aspartate + ATP = (2S)-2-[5-amino-1-(5-phospho-beta-D-ribosyl)imidazole-4-carboxamido]succinate + ADP + phosphate + 2 H(+). Its pathway is purine metabolism; IMP biosynthesis via de novo pathway; 5-amino-1-(5-phospho-D-ribosyl)imidazole-4-carboxamide from 5-amino-1-(5-phospho-D-ribosyl)imidazole-4-carboxylate: step 1/2. This chain is Phosphoribosylaminoimidazole-succinocarboxamide synthase, found in Cupriavidus pinatubonensis (strain JMP 134 / LMG 1197) (Cupriavidus necator (strain JMP 134)).